We begin with the raw amino-acid sequence, 337 residues long: tRNA N6-adenosine threonylcarbamoyltransferase (337 aa).

The Fe cation site is built by H114 and H118. Residues 136–140, D169, G182, D186, and N275 each bind substrate; that span reads LVSGG. Position 301 (D301) interacts with Fe cation.

The protein belongs to the KAE1 / TsaD family. The cofactor is Fe(2+).

It is found in the cytoplasm. The catalysed reaction is L-threonylcarbamoyladenylate + adenosine(37) in tRNA = N(6)-L-threonylcarbamoyladenosine(37) in tRNA + AMP + H(+). In terms of biological role, required for the formation of a threonylcarbamoyl group on adenosine at position 37 (t(6)A37) in tRNAs that read codons beginning with adenine. Is involved in the transfer of the threonylcarbamoyl moiety of threonylcarbamoyl-AMP (TC-AMP) to the N6 group of A37, together with TsaE and TsaB. TsaD likely plays a direct catalytic role in this reaction. In Streptococcus uberis (strain ATCC BAA-854 / 0140J), this protein is tRNA N6-adenosine threonylcarbamoyltransferase.